The following is a 374-amino-acid chain: Chaperone protein DnaJ (374 aa).

Residues 5 to 70 (DYYEVLGVER…SKRAAYDQYG (66 aa)) form the J domain. The segment at 133–211 (GTTVNIRVPT…CHGEGRVEEY (79 aa)) adopts a CR-type zinc-finger fold. C146, C149, C163, C166, C185, C188, C199, and C202 together coordinate Zn(2+). CXXCXGXG motif repeat units follow at residues 146-153 (CKPCDGSG), 163-170 (CPTCGGIG), 185-192 (CPRCHGQG), and 199-206 (CDSCHGEG).

Belongs to the DnaJ family. As to quaternary structure, homodimer. Zn(2+) serves as cofactor.

The protein localises to the cytoplasm. Its function is as follows. Participates actively in the response to hyperosmotic and heat shock by preventing the aggregation of stress-denatured proteins and by disaggregating proteins, also in an autonomous, DnaK-independent fashion. Unfolded proteins bind initially to DnaJ; upon interaction with the DnaJ-bound protein, DnaK hydrolyzes its bound ATP, resulting in the formation of a stable complex. GrpE releases ADP from DnaK; ATP binding to DnaK triggers the release of the substrate protein, thus completing the reaction cycle. Several rounds of ATP-dependent interactions between DnaJ, DnaK and GrpE are required for fully efficient folding. Also involved, together with DnaK and GrpE, in the DNA replication of plasmids through activation of initiation proteins. The sequence is that of Chaperone protein DnaJ from Pseudomonas fluorescens (strain ATCC BAA-477 / NRRL B-23932 / Pf-5).